We begin with the raw amino-acid sequence, 417 residues long: Gamma-glutamyl phosphate reductase (417 aa).

Belongs to the gamma-glutamyl phosphate reductase family.

The protein resides in the cytoplasm. The catalysed reaction is L-glutamate 5-semialdehyde + phosphate + NADP(+) = L-glutamyl 5-phosphate + NADPH + H(+). It participates in amino-acid biosynthesis; L-proline biosynthesis; L-glutamate 5-semialdehyde from L-glutamate: step 2/2. Catalyzes the NADPH-dependent reduction of L-glutamate 5-phosphate into L-glutamate 5-semialdehyde and phosphate. The product spontaneously undergoes cyclization to form 1-pyrroline-5-carboxylate. This is Gamma-glutamyl phosphate reductase from Legionella pneumophila (strain Lens).